A 273-amino-acid chain; its full sequence is Phosphate import ATP-binding protein PstB (273 aa).

The ABC transporter domain maps to isoleucine 18–asparagine 257. Glycine 50 to serine 57 contributes to the ATP binding site.

This sequence belongs to the ABC transporter superfamily. Phosphate importer (TC 3.A.1.7) family. In terms of assembly, the complex is composed of two ATP-binding proteins (PstB), two transmembrane proteins (PstC and PstA) and a solute-binding protein (PstS).

The protein localises to the cell inner membrane. It carries out the reaction phosphate(out) + ATP + H2O = ADP + 2 phosphate(in) + H(+). In terms of biological role, part of the ABC transporter complex PstSACB involved in phosphate import. Responsible for energy coupling to the transport system. The sequence is that of Phosphate import ATP-binding protein PstB from Prochlorococcus marinus (strain SARG / CCMP1375 / SS120).